The following is a 305-amino-acid chain: uncharacterized protein (305 aa).

It belongs to the IIV-6 436R family.

This is an uncharacterized protein from Acheta domesticus (House cricket).